A 481-amino-acid polypeptide reads, in one-letter code: Glutamate--tRNA ligase (481 aa).

The short motif at 11–21 is the 'HIGH' region element; it reads PSPTGLLHIGN. The 'KMSKS' region signature appears at 255–259; it reads KLSKR. An ATP-binding site is contributed by Lys258.

The protein belongs to the class-I aminoacyl-tRNA synthetase family. Glutamate--tRNA ligase type 1 subfamily. As to quaternary structure, monomer.

Its subcellular location is the cytoplasm. The enzyme catalyses tRNA(Glu) + L-glutamate + ATP = L-glutamyl-tRNA(Glu) + AMP + diphosphate. Its function is as follows. Catalyzes the attachment of glutamate to tRNA(Glu) in a two-step reaction: glutamate is first activated by ATP to form Glu-AMP and then transferred to the acceptor end of tRNA(Glu). In Streptococcus pyogenes serotype M4 (strain MGAS10750), this protein is Glutamate--tRNA ligase.